The primary structure comprises 361 residues: 3-dehydroquinate synthase (361 aa).

Residues 73–78 (DAEAGK), 107–111 (GAATD), 131–132 (TT), K144, K153, and 171–174 (TLET) each bind NAD(+). Zn(2+) is bound by residues E186, H249, and H265.

Belongs to the sugar phosphate cyclases superfamily. Dehydroquinate synthase family. It depends on NAD(+) as a cofactor. Co(2+) is required as a cofactor. Zn(2+) serves as cofactor.

The protein localises to the cytoplasm. The catalysed reaction is 7-phospho-2-dehydro-3-deoxy-D-arabino-heptonate = 3-dehydroquinate + phosphate. It functions in the pathway metabolic intermediate biosynthesis; chorismate biosynthesis; chorismate from D-erythrose 4-phosphate and phosphoenolpyruvate: step 2/7. Its function is as follows. Catalyzes the conversion of 3-deoxy-D-arabino-heptulosonate 7-phosphate (DAHP) to dehydroquinate (DHQ). This Mycobacterium leprae (strain TN) protein is 3-dehydroquinate synthase.